We begin with the raw amino-acid sequence, 240 residues long: Ribonuclease P protein component 3 (240 aa).

It belongs to the eukaryotic/archaeal RNase P protein component 3 family. Consists of a catalytic RNA component and at least 4-5 protein subunits.

Its subcellular location is the cytoplasm. It carries out the reaction Endonucleolytic cleavage of RNA, removing 5'-extranucleotides from tRNA precursor.. Part of ribonuclease P, a protein complex that generates mature tRNA molecules by cleaving their 5'-ends. The sequence is that of Ribonuclease P protein component 3 from Halorubrum lacusprofundi (strain ATCC 49239 / DSM 5036 / JCM 8891 / ACAM 34).